Here is a 391-residue protein sequence, read N- to C-terminus: Putative neutrophil cytosol factor 1B (391 aa).

One can recognise a PX domain in the interval 1–126 (MGDTFIRHIA…DFFKVRPDDL (126 aa)). 2 consecutive SH3 domains span residues 157–216 (IILQ…PLDS) and 227–286 (YAGE…KSGQ). Residues 286-391 (QDVSQAQRQI…STKRKLASAV (106 aa)) form a disordered region. Phosphoserine is present on residues Ser304 and Ser305. A compositionally biased stretch (basic residues) spans 310–319 (HSIHQRSRKR). Phosphoserine occurs at positions 321, 329, 346, and 349.

The protein resides in the cytoplasm. Its function is as follows. May be required for activation of the latent NADPH oxidase (necessary for superoxide production). The protein is Putative neutrophil cytosol factor 1B (NCF1B) of Homo sapiens (Human).